The following is a 147-amino-acid chain: UPF0306 protein YPTB0506 (147 aa).

This sequence belongs to the UPF0306 family.

This is UPF0306 protein YPTB0506 from Yersinia pseudotuberculosis serotype I (strain IP32953).